The chain runs to 231 residues: Class A basic helix-loop-helix protein 9 (231 aa).

Residues 61–113 (ARRMAANVRERKRILDYNEAFNALRRALQHDLGGKRLSKIATLRRAIHRITAL) enclose the bHLH domain. A disordered region spans residues 135 to 168 (QAAQGSSTGNSSFSVPRSAPSPIAPSLTRRDIAS). The span at 137–149 (AQGSSTGNSSFSV) shows a compositional bias: polar residues.

In terms of assembly, heterodimer. Efficient DNA binding requires dimerization with another bHLH protein. Interacts with TCF3, TCF4, and TCF12.

Its subcellular location is the nucleus. Functionally, transcription factor, which play a role in limb development. Is an essential player in the regulatory network governing transcription of genes implicated in limb morphogenesis. The polypeptide is Class A basic helix-loop-helix protein 9 (Bhlha9) (Mus musculus (Mouse)).